We begin with the raw amino-acid sequence, 141 residues long: Large ribosomal subunit protein uL11 (141 aa).

Belongs to the universal ribosomal protein uL11 family. Part of the ribosomal stalk of the 50S ribosomal subunit. Interacts with L10 and the large rRNA to form the base of the stalk. L10 forms an elongated spine to which L12 dimers bind in a sequential fashion forming a multimeric L10(L12)X complex. Post-translationally, one or more lysine residues are methylated.

Forms part of the ribosomal stalk which helps the ribosome interact with GTP-bound translation factors. This chain is Large ribosomal subunit protein uL11, found in Synechococcus sp. (strain CC9902).